We begin with the raw amino-acid sequence, 339 residues long: Ketol-acid reductoisomerase (NADP(+)) (339 aa).

Residues 1 to 182 (MRVYYDRDAD…GGGRAGIIET (182 aa)) form the KARI N-terminal Rossmann domain. Residues 24-27 (YGSQ), arginine 48, serine 51, threonine 53, and 83-86 (DELQ) contribute to the NADP(+) site. Residue histidine 108 is part of the active site. Glycine 134 is a binding site for NADP(+). The region spanning 183–328 (TFKEECETDL…AKLRGMMPWI (146 aa)) is the KARI C-terminal knotted domain. Mg(2+) is bound by residues aspartate 191, glutamate 195, glutamate 227, and glutamate 231. Residue serine 252 coordinates substrate.

This sequence belongs to the ketol-acid reductoisomerase family. It depends on Mg(2+) as a cofactor.

It carries out the reaction (2R)-2,3-dihydroxy-3-methylbutanoate + NADP(+) = (2S)-2-acetolactate + NADPH + H(+). The enzyme catalyses (2R,3R)-2,3-dihydroxy-3-methylpentanoate + NADP(+) = (S)-2-ethyl-2-hydroxy-3-oxobutanoate + NADPH + H(+). Its pathway is amino-acid biosynthesis; L-isoleucine biosynthesis; L-isoleucine from 2-oxobutanoate: step 2/4. It participates in amino-acid biosynthesis; L-valine biosynthesis; L-valine from pyruvate: step 2/4. Involved in the biosynthesis of branched-chain amino acids (BCAA). Catalyzes an alkyl-migration followed by a ketol-acid reduction of (S)-2-acetolactate (S2AL) to yield (R)-2,3-dihydroxy-isovalerate. In the isomerase reaction, S2AL is rearranged via a Mg-dependent methyl migration to produce 3-hydroxy-3-methyl-2-ketobutyrate (HMKB). In the reductase reaction, this 2-ketoacid undergoes a metal-dependent reduction by NADPH to yield (R)-2,3-dihydroxy-isovalerate. The polypeptide is Ketol-acid reductoisomerase (NADP(+)) (Methylorubrum extorquens (strain CM4 / NCIMB 13688) (Methylobacterium extorquens)).